The primary structure comprises 207 residues: Outer-membrane lipoprotein LolB (207 aa).

A signal peptide spans 1-21; sequence MPQRKISFYRLLPLATLLLAA. The N-palmitoyl cysteine moiety is linked to residue Cys-22. Cys-22 carries the S-diacylglycerol cysteine lipid modification.

It belongs to the LolB family. Monomer.

The protein resides in the cell outer membrane. Its function is as follows. Plays a critical role in the incorporation of lipoproteins in the outer membrane after they are released by the LolA protein. The polypeptide is Outer-membrane lipoprotein LolB (Yersinia enterocolitica serotype O:8 / biotype 1B (strain NCTC 13174 / 8081)).